A 198-amino-acid polypeptide reads, in one-letter code: Segregation and condensation protein B (198 aa).

A disordered region spans residues leucine 169–glutamate 198.

This sequence belongs to the ScpB family. As to quaternary structure, homodimer. Homodimerization may be required to stabilize the binding of ScpA to the Smc head domains. Component of a cohesin-like complex composed of ScpA, ScpB and the Smc homodimer, in which ScpA and ScpB bind to the head domain of Smc. The presence of the three proteins is required for the association of the complex with DNA.

The protein localises to the cytoplasm. In terms of biological role, participates in chromosomal partition during cell division. May act via the formation of a condensin-like complex containing Smc and ScpA that pull DNA away from mid-cell into both cell halves. This chain is Segregation and condensation protein B, found in Listeria monocytogenes serotype 4a (strain HCC23).